A 334-amino-acid polypeptide reads, in one-letter code: N-acetyl-gamma-glutamyl-phosphate reductase (334 aa).

C154 is an active-site residue.

Belongs to the NAGSA dehydrogenase family. Type 1 subfamily.

Its subcellular location is the cytoplasm. The catalysed reaction is N-acetyl-L-glutamate 5-semialdehyde + phosphate + NADP(+) = N-acetyl-L-glutamyl 5-phosphate + NADPH + H(+). The protein operates within amino-acid biosynthesis; L-arginine biosynthesis; N(2)-acetyl-L-ornithine from L-glutamate: step 3/4. In terms of biological role, catalyzes the NADPH-dependent reduction of N-acetyl-5-glutamyl phosphate to yield N-acetyl-L-glutamate 5-semialdehyde. The chain is N-acetyl-gamma-glutamyl-phosphate reductase from Buchnera aphidicola subsp. Schizaphis graminum (strain Sg).